The following is a 154-amino-acid chain: MTIKKMNVESFNLDHTKVKAPYIRVAGYKDGKVDQVVKYDIRFTQPNVEQMPMRAMHTLEHLLAENIRNYSDDVIDVSPMGCQTGFYMAMMNFDSVEKMSELVEKTLKDVLAAEEIPAQNEVQCGFASAHDLKGAKHYAEKMLAGRDEWDIVFG.

Fe cation contacts are provided by His57, His61, and Cys124.

Belongs to the LuxS family. As to quaternary structure, homodimer. Fe cation serves as cofactor.

It catalyses the reaction S-(5-deoxy-D-ribos-5-yl)-L-homocysteine = (S)-4,5-dihydroxypentane-2,3-dione + L-homocysteine. Functionally, involved in the synthesis of autoinducer 2 (AI-2) which is secreted by bacteria and is used to communicate both the cell density and the metabolic potential of the environment. The regulation of gene expression in response to changes in cell density is called quorum sensing. Catalyzes the transformation of S-ribosylhomocysteine (RHC) to homocysteine (HC) and 4,5-dihydroxy-2,3-pentadione (DPD). The protein is S-ribosylhomocysteine lyase of Exiguobacterium sibiricum (strain DSM 17290 / CCUG 55495 / CIP 109462 / JCM 13490 / 255-15).